Consider the following 212-residue polypeptide: N-acetyltransferase 9-like protein (212 aa).

The 168-residue stretch at 34 to 201 folds into the N-acetyltransferase domain; sequence EEIREQTASE…INLLNLKNND (168 aa).

Belongs to the acetyltransferase family. GNAT subfamily.

This Dictyostelium discoideum (Social amoeba) protein is N-acetyltransferase 9-like protein (nat9).